We begin with the raw amino-acid sequence, 803 residues long: Mechanosensitive cation channel TMEM63A (803 aa).

At 1–51 (MTDSPFLELWQSRTVAIRERLGIGDQPNDSYCYNSAKNSTVLQGVTFGGIP) the chain is on the extracellular side. The chain crosses the membrane as a helical span at residues 52 to 74 (TVLFIDVSCFLFLIVVFSIIRRK). Over 75 to 133 (FWDYGRIALVSEGNSESRFRRLSSSSSGQQDFESELGCCSWLTAIFRLHDDQILEWCGE) the chain is Cytoplasmic. The helical transmembrane segment at 134–166 (DAIHYLSFQRHIIFLLVVVSCLSLCIILPVNLS) threads the bilayer. Over 167–190 (GDLLDKDPYSFGRTTIANLQTDNN) the chain is Extracellular. A helical membrane pass occupies residues 191 to 216 (LLWLHTIFAILYLILTVVFMRHHTQS). The Cytoplasmic portion of the chain corresponds to 217-415 (IKYKEESLVR…CWKNLSIQGF (199 aa)). The tract at residues 218-413 (KYKEESLVRR…DICWKNLSIQ (196 aa)) is intracellular linker IL2; confers mechanosensitivity. The chain crosses the membrane as a helical span at residues 416–443 (RWWFQWLGINFILFVGLFFLTTPSIILS). Residues 444–461 (TMDKFNVTKPIHALNDPI) are Extracellular-facing. A helical transmembrane segment spans residues 462-489 (ISQFFPTLLLWSFSALLPTIVCYSTLLE). At 490–494 (SHWTK) the chain is on the cytoplasmic side. A helical transmembrane segment spans residues 495–531 (SGENRIMMTKVYIFLIFMVLILPSLGLTSLDFFFRWL). Residues 532 to 553 (FDKTSSEASIRLECVFLPDQGA) lie on the Extracellular side of the membrane. Residues 554–585 (FFVNYVIASAFIGNGMELLRLPGLILYTFRMV) form a helical membrane-spanning segment. A gating helix region spans residues 554–585 (FFVNYVIASAFIGNGMELLRLPGLILYTFRMV). The Cytoplasmic portion of the chain corresponds to 586–605 (MAKTAADRRNVKQHQAFEYE). The helical transmembrane segment at 606-623 (FGAMYAWMLCVFTVIMAY) threads the bilayer. Topologically, residues 624–627 (SITC) are extracellular. The helical transmembrane segment at 628–650 (PIIVPFGLIYILLKHMVDRHNLY) threads the bilayer. Over 651 to 660 (FAYLPAKLEK) the chain is Cytoplasmic. The helical transmembrane segment at 661-688 (RIHFAAVNQALAAPILCLFWLYFFSFLR) threads the bilayer. Topologically, residues 689-693 (LGLKA) are extracellular. Residues 694-708 (PLTLFTFLVLLLTIL) form a helical membrane-spanning segment. At 709 to 803 (VCLAYTCFGC…DSVAAADQED (95 aa)) the chain is on the cytoplasmic side.

Belongs to the CSC1 (TC 1.A.17) family. In terms of assembly, (Microbial infection) Interacts with H.contortus GAL-1 (via domain galectin 1).

It localises to the lysosome membrane. The protein localises to the early endosome membrane. The protein resides in the cell membrane. It catalyses the reaction Ca(2+)(in) = Ca(2+)(out). Mechanosensitive cation channel with low conductance and high activation threshold. In contrast to TMEM63B, does not show phospholipid scramblase activity. Acts as a regulator of lysosomal morphology by mediating lysosomal mechanosensitivity. Important for the baby's first breath and respiration throughout life. Upon lung inflation conducts cation currents in alveolar type 1 and 2 cells triggering lamellar body exocytosis and surfactant secretion into airspace. Also acts as an osmosensitive cation channel preferentially activated by hypotonic stress. In terms of biological role, (Microbial infection) Involved in the immunomodulatory effects exerted by H.contortus GAL-1 on host peripheral blood mononuclear cells to down-regulate host immune response. This is Mechanosensitive cation channel TMEM63A (TMEM63A) from Capra hircus (Goat).